The primary structure comprises 405 residues: Deoxyguanosinetriphosphate triphosphohydrolase-like protein (405 aa).

The HD domain maps to 75 to 219 (RLTHTIEVAQ…AAIADDIAYN (145 aa)).

This sequence belongs to the dGTPase family. Type 2 subfamily.

The chain is Deoxyguanosinetriphosphate triphosphohydrolase-like protein from Sinorhizobium medicae (strain WSM419) (Ensifer medicae).